The chain runs to 350 residues: DNA polymerase IV (350 aa).

A UmuC domain is found at 6–187 (IIHIDMDAFY…LPVEKIFGIG (182 aa)). The Mg(2+) site is built by Asp10 and Asp105. The active site involves Glu106.

It belongs to the DNA polymerase type-Y family. Monomer. Mg(2+) serves as cofactor.

The protein resides in the cytoplasm. The enzyme catalyses DNA(n) + a 2'-deoxyribonucleoside 5'-triphosphate = DNA(n+1) + diphosphate. Functionally, poorly processive, error-prone DNA polymerase involved in untargeted mutagenesis. Copies undamaged DNA at stalled replication forks, which arise in vivo from mismatched or misaligned primer ends. These misaligned primers can be extended by PolIV. Exhibits no 3'-5' exonuclease (proofreading) activity. May be involved in translesional synthesis, in conjunction with the beta clamp from PolIII. This chain is DNA polymerase IV, found in Protochlamydia amoebophila (strain UWE25).